A 649-amino-acid polypeptide reads, in one-letter code: Glucan endo-1,3-beta-glucosidase btgC (649 aa).

2 disordered regions span residues 1-50 (MGDR…AHTH) and 110-224 (YHTT…AGGA). Over 1–274 (MGDRSEQYGD…PRPSGASRKR (274 aa)) the chain is Cytoplasmic. Over residues 144–157 (GSSAALSAAGAPAG) the composition is skewed to low complexity. Positions 198-208 (NPDDILDDGDD) are enriched in acidic residues. The helical; Signal-anchor for type II membrane protein transmembrane segment at 275-295 (GWIIGGILAFIVIGAIVGGAV) threads the bilayer. The Extracellular segment spans residues 296–649 (GGTLGNRRSE…IPDCGGKTAA (354 aa)). The tract at residues 301-329 (NRRSETASESSEVSADDDTETNGDLDKNS) is disordered. A compositionally biased stretch (acidic residues) spans 314–323 (SADDDTETNG). 3 N-linked (GlcNAc...) asparagine glycosylation sites follow: asparagine 369, asparagine 392, and asparagine 420. The Proton donor role is filled by glutamate 452. The active-site Nucleophile is glutamate 551. Asparagine 596 is a glycosylation site (N-linked (GlcNAc...) asparagine).

This sequence belongs to the glycosyl hydrolase 17 family.

It localises to the cell membrane. It carries out the reaction Hydrolysis of (1-&gt;3)-beta-D-glucosidic linkages in (1-&gt;3)-beta-D-glucans.. Functionally, glucanases play a role in cell expansion during growth, in cell-cell fusion during mating, and in spore release during sporulation. This enzyme may be involved in beta-glucan degradation. Active on laminarin and lichenan. This chain is Glucan endo-1,3-beta-glucosidase btgC (btgC), found in Emericella nidulans (strain FGSC A4 / ATCC 38163 / CBS 112.46 / NRRL 194 / M139) (Aspergillus nidulans).